A 208-amino-acid polypeptide reads, in one-letter code: uncharacterized protein (208 aa).

The signal sequence occupies residues M1–A34.

This is an uncharacterized protein from Sinorhizobium fredii (strain NBRC 101917 / NGR234).